The chain runs to 536 residues: CTP synthase (536 aa).

Positions 1-267 are amidoligase domain; sequence MSKFVFVTGG…CKETLNYLEL (267 aa). Ser-13 contacts CTP. A UTP-binding site is contributed by Ser-13. ATP is bound by residues 14 to 19 and Asp-71; that span reads SIGKGI. Mg(2+)-binding residues include Asp-71 and Glu-141. CTP-binding positions include 148 to 150, 188 to 193, and Lys-224; these read DIE and KTKPTQ. UTP is bound by residues 188 to 193 and Lys-224; that span reads KTKPTQ. The region spanning 292–534 is the Glutamine amidotransferase type-1 domain; it reads KVALVGKYIE…IKASQDKLTQ (243 aa). Position 354 (Gly-354) interacts with L-glutamine. The Nucleophile; for glutamine hydrolysis role is filled by Cys-381. Residues 382–385, Glu-405, and Arg-462 each bind L-glutamine; that span reads LGMQ. Residues His-507 and Glu-509 contribute to the active site.

Belongs to the CTP synthase family. In terms of assembly, homotetramer.

The enzyme catalyses UTP + L-glutamine + ATP + H2O = CTP + L-glutamate + ADP + phosphate + 2 H(+). It carries out the reaction L-glutamine + H2O = L-glutamate + NH4(+). The catalysed reaction is UTP + NH4(+) + ATP = CTP + ADP + phosphate + 2 H(+). It functions in the pathway pyrimidine metabolism; CTP biosynthesis via de novo pathway; CTP from UDP: step 2/2. With respect to regulation, allosterically activated by GTP, when glutamine is the substrate; GTP has no effect on the reaction when ammonia is the substrate. The allosteric effector GTP functions by stabilizing the protein conformation that binds the tetrahedral intermediate(s) formed during glutamine hydrolysis. Inhibited by the product CTP, via allosteric rather than competitive inhibition. Its function is as follows. Catalyzes the ATP-dependent amination of UTP to CTP with either L-glutamine or ammonia as the source of nitrogen. Regulates intracellular CTP levels through interactions with the four ribonucleotide triphosphates. The protein is CTP synthase of Prochlorococcus marinus (strain MIT 9301).